We begin with the raw amino-acid sequence, 41 residues long: Peptide Hact-SCRiP1 (41 aa).

Disulfide bonds link Cys-5-Cys-37, Cys-12-Cys-31, Cys-19-Cys-38, and Cys-26-Cys-39.

As to expression, expressed in tentacles.

It localises to the nematocyst. It is found in the secreted. Its function is as follows. Peptide with unknown function. Does not exhibit any effect on human ion channel TRPV1 in a Xenopus laevis oocytes assay. This Heliofungia actiniformis (Mushroom coral) protein is Peptide Hact-SCRiP1.